The following is a 1025-amino-acid chain: Multidrug resistance protein MdtC (1025 aa).

The next 12 helical transmembrane spans lie at 3–23 (FFAL…AITL), 333–353 (EVEQ…FLFL), 360–380 (IIPA…MYLC), 387–407 (LSLM…IVVL), 431–451 (VGFT…PLLL), 463–483 (FAVT…TLTP), 528–548 (LVGM…ISIP), 853–873 (VILI…LYES), 875–895 (VHPL…LLAL), 897–917 (LFNA…IGIV), 953–973 (PIMM…LSGG), and 984–1004 (ITIV…TPVV).

The protein belongs to the resistance-nodulation-cell division (RND) (TC 2.A.6) family. MdtC subfamily. As to quaternary structure, part of a tripartite efflux system composed of MdtA, MdtB and MdtC. MdtC forms a heteromultimer with MdtB.

It localises to the cell inner membrane. The MdtABC tripartite complex confers resistance against novobiocin and deoxycholate. The polypeptide is Multidrug resistance protein MdtC (Escherichia coli O157:H7 (strain EC4115 / EHEC)).